Here is a 470-residue protein sequence, read N- to C-terminus: Properdin (470 aa).

Positions 1 to 26 (MTAPVQVPQSLLLLLMLLLTLPATGS) are cleaved as a signal peptide. TSP type-1 domains lie at 27–75 (DPVL…QACR), 76–133 (SPRW…QCCP), 135–190 (MGGW…QVCP), 192–254 (HGAW…PPCP), 256–312 (AGGW…VPCP), 314–376 (DGEW…QNCI), and 380–463 (KGSW…PACK). 3 disulfide bridges follow: Cys31–Cys55, Cys42–Cys71, and Cys56–Cys74. C-linked (Man) tryptophan glycosylation is found at Trp82 and Trp85. 7 disulfides stabilise this stretch: Cys88–Cys126, Cys92–Cys132, Cys103–Cys110, Cys131–Cys169, Cys147–Cys183, Cys151–Cys189, and Cys162–Cys173. C-linked (Man) tryptophan glycosylation is found at Trp138, Trp141, and Trp144. Thr150 carries O-linked (Fuc...) threonine glycosylation. C-linked (Man) tryptophan glycosylation is found at Trp195, Trp198, and Trp201. 3 disulfide bridges follow: Cys204/Cys247, Cys208/Cys253, and Cys223/Cys237. Residue Ser207 is glycosylated (O-linked (Fuc...) serine). Trp259 and Trp262 each carry a C-linked (Man) tryptophan glycan. 3 cysteine pairs are disulfide-bonded: Cys268/Cys305, Cys272/Cys311, and Cys283/Cys295. O-linked (Fuc...) threonine glycosylation is present at Thr271. C-linked (Man) tryptophan glycans are attached at residues Trp320 and Trp323. Cystine bridges form between Cys326-Cys369, Cys336-Cys375, and Cys349-Cys359. Residues 350 to 358 (KGRKFNGQR) form an interaction with Complement C3 beta chain region. C-linked (Man) tryptophan glycosylation is found at Trp383, Trp386, and Trp389. Disulfide bonds link Cys392–Cys456, Cys396–Cys462, and Cys408–Cys440. An N-linked (GlcNAc...) asparagine glycan is attached at Asn429.

In terms of assembly, in plasma, properdin exists as dimers, trimers or tetramers in the relative proportions of 26:54:20. Interacts with the pro-C3-convertase enzyme complex (C3b-Bb) comprised of Complement C3 beta chain (C3b) and the Complement factor B Bb fragment (Bb), where it binds (via its TSP type-1 5 domain) with C3b and Bb. This interaction stabilizes the complex and allows it to become the active C3-convertase enzyme complex (C3b-Bb-FP). Interacts with C3b. Interacts with CFB.

Its subcellular location is the secreted. Its function is as follows. A positive regulator of the alternate pathway of complement. It binds to and stabilizes the C3- and C5-convertase enzyme complexes. Inhibits CFI-CFH mediated degradation of Inhibits CFI-CFH mediated degradation of Complement C3 beta chain (C3b). This Cavia porcellus (Guinea pig) protein is Properdin (CFP).